The sequence spans 298 residues: 4-hydroxy-tetrahydrodipicolinate synthase (298 aa).

A pyruvate-binding site is contributed by threonine 48. Residue tyrosine 137 is the Proton donor/acceptor of the active site. Lysine 166 (schiff-base intermediate with substrate) is an active-site residue. Pyruvate is bound at residue isoleucine 207.

Belongs to the DapA family. In terms of assembly, homotetramer; dimer of dimers.

It localises to the cytoplasm. It catalyses the reaction L-aspartate 4-semialdehyde + pyruvate = (2S,4S)-4-hydroxy-2,3,4,5-tetrahydrodipicolinate + H2O + H(+). It functions in the pathway amino-acid biosynthesis; L-lysine biosynthesis via DAP pathway; (S)-tetrahydrodipicolinate from L-aspartate: step 3/4. In terms of biological role, catalyzes the condensation of (S)-aspartate-beta-semialdehyde [(S)-ASA] and pyruvate to 4-hydroxy-tetrahydrodipicolinate (HTPA). This chain is 4-hydroxy-tetrahydrodipicolinate synthase, found in Campylobacter jejuni subsp. doylei (strain ATCC BAA-1458 / RM4099 / 269.97).